Here is a 456-residue protein sequence, read N- to C-terminus: tRNA(Ile)-lysidine synthase (456 aa).

28 to 33 serves as a coordination point for ATP; it reads SGGSDS.

Belongs to the tRNA(Ile)-lysidine synthase family.

Its subcellular location is the cytoplasm. It carries out the reaction cytidine(34) in tRNA(Ile2) + L-lysine + ATP = lysidine(34) in tRNA(Ile2) + AMP + diphosphate + H(+). Its function is as follows. Ligates lysine onto the cytidine present at position 34 of the AUA codon-specific tRNA(Ile) that contains the anticodon CAU, in an ATP-dependent manner. Cytidine is converted to lysidine, thus changing the amino acid specificity of the tRNA from methionine to isoleucine. This Brucella anthropi (strain ATCC 49188 / DSM 6882 / CCUG 24695 / JCM 21032 / LMG 3331 / NBRC 15819 / NCTC 12168 / Alc 37) (Ochrobactrum anthropi) protein is tRNA(Ile)-lysidine synthase.